The sequence spans 183 residues: U3 small nucleolar ribonucleoprotein protein imp3 (183 aa).

The region spanning 108–174 (RRLPVVMRNI…IKKHVMDYNN (67 aa)) is the S4 RNA-binding domain.

This sequence belongs to the universal ribosomal protein uS4 family. In terms of assembly, component of a heterotrimeric complex containing imp3, imp4 and mpp10.

The protein resides in the nucleus. It is found in the nucleolus. In terms of biological role, component of the U3 small nucleolar ribonucleoprotein. Required for the early cleavages at sites A0, A1 and A2 during 18S ribosomal pre-RNA processing. The polypeptide is U3 small nucleolar ribonucleoprotein protein imp3 (Caenorhabditis elegans).